The chain runs to 831 residues: DNA helicase MCM8 (831 aa).

Over residues 1–20 (MSQGWRGGSGGWRGGGGGNP) the composition is skewed to gly residues. The tract at residues 1–53 (MSQGWRGGSGGWRGGGGGNPYAGAWRGRPWRGRGQGGTWSRNNGRDPVCFAPP) is disordered. In terms of domain architecture, MCM spans 395 to 602 (LFQLIVNSLC…DHDHLLSEHV (208 aa)). Position 447–454 (447–454 (GDPGLGKS)) interacts with ATP.

This sequence belongs to the MCM family. As to quaternary structure, component of the MCM8-MCM9 complex, which forms a hexamer composed of mcm8 and mcm9.

The protein resides in the nucleus. It carries out the reaction ATP + H2O = ADP + phosphate + H(+). Its function is as follows. Component of the MCM8-MCM9 complex, a complex involved in homologous recombination repair following DNA interstrand cross-links and plays a key role during gametogenesis. The MCM8-MCM9 complex probably acts as a hexameric helicase required to process aberrant forks into homologous recombination substrates and to orchestrate homologous recombination with resection, fork stabilization and fork restart. In eggs, required for elongation during DNA replication by facilitating the recruitment of rpa2/rpa34 and stimulating the processivity of DNA polymerases at replication foci. Probably not required for DNA replication in other cells. This Xenopus laevis (African clawed frog) protein is DNA helicase MCM8 (mcm8).